The sequence spans 668 residues: Pentatricopeptide repeat-containing protein CRP1, chloroplastic (668 aa).

The N-terminal 64 residues, 1–64, are a transit peptide targeting the chloroplast; that stretch reads MPASLLPPTF…SASLTSPSPP (64 aa). PPR repeat units lie at residues 154-188, 189-226, 227-261, 262-297, 298-332, 333-367, 368-402, 403-437, 438-472, 473-507, 508-542, 543-577, 578-612, and 613-647; these read SPLLLNSLLAASAAASRPAVALRLLSLLREHDFLP, DLASYSHLLASLLNTRDPPDAALLERLLGDLRESRLEP, DAPLFSDLISAFARAALPDAALELLASAQAIGLTP, RSNAVTALISALGTAGRVAEAEALFLEFFLAGEIKP, RTRAYNALLKGYVRIASLKNAEQVLDEMSQCGVAP, DEATYSLLVDAYTRAGRWESARILLKEMEADGVKP, SSYVFSRILAGFRDRGDWQKAFAVLREMQASGVRP, DRHFYNVMIDTFGKYNCLGHAMDAFNKMREEGIEP, DVVTWNTLIDAHCKGGRHDRAAELFEEMRESNCPP, GTTTYNIMINLLGEQEHWEGVEAMLSEMKEQGLVP, NIITYTTLVDVYGRSGRYKEAIDCIEAMKADGLKP, SPTMYHALVNAYAQRGLADHALNVVKAMKADGLEV, SILVLNSLINAFGEDRRVVEAFSVLQFMRENGLRP, and DVITYTTLMKALIRVEQFDKVPVIYEEMITSGCAP.

Belongs to the PPR family. P subfamily. As to quaternary structure, component of a multisubunit complex.

It localises to the plastid. The protein localises to the chloroplast stroma. In terms of biological role, required for the translation of the chloroplast petA and petD mRNAs. Required for the processing of the petD mRNA from a polycistronic precursor. Binds with high affinity to the 5'-UTR of the chloroplastic petA transcript. Activates psaC and petA translation by binding their 5'-UTRs. In Zea mays (Maize), this protein is Pentatricopeptide repeat-containing protein CRP1, chloroplastic.